Consider the following 188-residue polypeptide: MNPQVSNIIIMLVMMQLSRRIDMEDPTIIMYIRILYCSSIGISWIIYQMARKRIVAKNDMTTMKYVEPGNAMSGEGEKLQVTTVRDYDLKEIDSAIKSIYTGMAMMGFMHLYLKYTNPLFMQSISPVKSALEHNEVKIHLFGKPATGDLKRPFKAPSLFGGMGQTGPKTDKKSIEEAERAGNAGVKAE.

A helical transmembrane segment spans residues 27–47 (TIIMYIRILYCSSIGISWIIY). The residue at position 157 (Ser157) is a Phosphoserine. The disordered stretch occupies residues 157–188 (SLFGGMGQTGPKTDKKSIEEAERAGNAGVKAE). Positions 168 to 179 (KTDKKSIEEAER) are enriched in basic and acidic residues.

This sequence belongs to the PHO88 family. As to quaternary structure, interacts with ENV10/SND2. ENV10/SND2 and PHO88/SND3 form a complex with the translocon in the endoplasmic reticulum membrane.

Its subcellular location is the endoplasmic reticulum membrane. The protein resides in the mitochondrion. Functions in the SND pathway, a SRP (signal recognition particle) and GET (guided entry of tail-anchored proteins) independent pathway for targeting a broad range of substrate proteins to the endoplasmic reticulum. SND functions in parallel to GET in targeting proteins with downstream hydrophobic motifs. Involved in inorganic phosphate uptake. Also involved in telomere length regulation and maintenance. The polypeptide is SRP-independent targeting protein 3 (Saccharomyces cerevisiae (strain ATCC 204508 / S288c) (Baker's yeast)).